Here is a 206-residue protein sequence, read N- to C-terminus: Large ribosomal subunit protein uL4 (206 aa).

Residues 51 to 76 are disordered; sequence AKTRAEVSGGGIKPWRQKGTGRARQG.

This sequence belongs to the universal ribosomal protein uL4 family. In terms of assembly, part of the 50S ribosomal subunit.

In terms of biological role, one of the primary rRNA binding proteins, this protein initially binds near the 5'-end of the 23S rRNA. It is important during the early stages of 50S assembly. It makes multiple contacts with different domains of the 23S rRNA in the assembled 50S subunit and ribosome. Its function is as follows. Forms part of the polypeptide exit tunnel. The sequence is that of Large ribosomal subunit protein uL4 from Clostridium kluyveri (strain ATCC 8527 / DSM 555 / NBRC 12016 / NCIMB 10680 / K1).